Reading from the N-terminus, the 161-residue chain is Nucleotide-binding protein Bxeno_A3642 (161 aa).

Belongs to the YajQ family.

Functionally, nucleotide-binding protein. This Paraburkholderia xenovorans (strain LB400) protein is Nucleotide-binding protein Bxeno_A3642.